The chain runs to 284 residues: Nucleotide-binding protein Sbal195_0713 (284 aa).

An ATP-binding site is contributed by Gly8–Ser15. Asp56–Asn59 serves as a coordination point for GTP.

The protein belongs to the RapZ-like family.

In terms of biological role, displays ATPase and GTPase activities. The protein is Nucleotide-binding protein Sbal195_0713 of Shewanella baltica (strain OS195).